Consider the following 247-residue polypeptide: Ribosomal RNA processing protein 36 homolog (247 aa).

4 disordered regions span residues Met-1–Asp-29, Arg-62–Pro-89, Ser-136–Val-188, and Gly-218–Gln-247. Residues Ser-8 to Glu-23 show a composition bias toward acidic residues. Basic and acidic residues-rich tracts occupy residues Ser-136 to Leu-153 and Glu-164 to Arg-174. The segment covering Gly-218–Pro-240 has biased composition (basic residues).

The protein belongs to the RRP36 family.

It localises to the nucleus. The protein localises to the nucleolus. In terms of biological role, involved in the early processing steps of the pre-rRNA in the maturation pathway leading to the 18S rRNA. In Nematostella vectensis (Starlet sea anemone), this protein is Ribosomal RNA processing protein 36 homolog.